The primary structure comprises 391 residues: Homoserine O-acetyltransferase (391 aa).

An AB hydrolase-1 domain is found at 50–360; sequence NAILICHALT…DKGHDAFLLD (311 aa). Ser155 acts as the Nucleophile in catalysis. Arg225 serves as a coordination point for substrate. Active-site residues include Asp321 and His354. Position 355 (Asp355) interacts with substrate.

The protein belongs to the AB hydrolase superfamily. MetX family. In terms of assembly, homodimer.

Its subcellular location is the cytoplasm. It catalyses the reaction L-homoserine + acetyl-CoA = O-acetyl-L-homoserine + CoA. It functions in the pathway amino-acid biosynthesis; L-methionine biosynthesis via de novo pathway; O-acetyl-L-homoserine from L-homoserine: step 1/1. In terms of biological role, transfers an acetyl group from acetyl-CoA to L-homoserine, forming acetyl-L-homoserine. This is Homoserine O-acetyltransferase from Rhodospirillum rubrum (strain ATCC 11170 / ATH 1.1.1 / DSM 467 / LMG 4362 / NCIMB 8255 / S1).